The chain runs to 320 residues: L-lactate dehydrogenase 1 (320 aa).

Residues valine 18, aspartate 39, arginine 44, tyrosine 69, and 83–84 each bind NAD(+); that span reads GA. 2 residues coordinate substrate: glutamine 86 and arginine 92. Residues serine 105, 122-124, and serine 147 each bind NAD(+); that span reads AAN. Residue 124-127 participates in substrate binding; sequence NPVD. 152–155 provides a ligand contact to substrate; it reads DSSR. Residue histidine 179 is the Proton acceptor of the active site. Tyrosine 223 bears the Phosphotyrosine mark. Position 232 (threonine 232) interacts with substrate.

It belongs to the LDH/MDH superfamily. LDH family. Homotetramer.

It localises to the cytoplasm. The catalysed reaction is (S)-lactate + NAD(+) = pyruvate + NADH + H(+). It functions in the pathway fermentation; pyruvate fermentation to lactate; (S)-lactate from pyruvate: step 1/1. Its function is as follows. Catalyzes the conversion of lactate to pyruvate. This is L-lactate dehydrogenase 1 from Lactiplantibacillus plantarum (strain ATCC BAA-793 / NCIMB 8826 / WCFS1) (Lactobacillus plantarum).